Reading from the N-terminus, the 402-residue chain is Meiosis-specific cyclin rem1 (402 aa).

This sequence belongs to the cyclin family. Cyclin AB subfamily.

Functionally, required for pre-meiotic DNA synthesis and S phase progression. Regulates levels of meiotic intragenic recombination. The sequence is that of Meiosis-specific cyclin rem1 (rem1) from Schizosaccharomyces pombe (strain 972 / ATCC 24843) (Fission yeast).